The primary structure comprises 872 residues: Cilia- and flagella-associated protein 58 (872 aa).

Coiled coils occupy residues 106–595 and 642–839; these read VDSA…ADGE and ESQY…QKNK.

Belongs to the CFAP58 family. As to quaternary structure, interacts with ODFP2.

Its subcellular location is the cell projection. It is found in the cilium. It localises to the flagellum. The protein resides in the cytoplasm. The protein localises to the cytoskeleton. Its subcellular location is the microtubule organizing center. It is found in the centrosome. Functionally, has an essential role in the assembly and organization of the sperm flagellar axoneme. Required for the elongation of the primary cilium and sperm flagellar midpiece via modulation of the Notch signaling pathway. This chain is Cilia- and flagella-associated protein 58, found in Homo sapiens (Human).